Reading from the N-terminus, the 241-residue chain is 6-phosphogluconolactonase (241 aa).

This sequence belongs to the glucosamine/galactosamine-6-phosphate isomerase family. 6-phosphogluconolactonase subfamily.

The catalysed reaction is 6-phospho-D-glucono-1,5-lactone + H2O = 6-phospho-D-gluconate + H(+). It participates in carbohydrate degradation; pentose phosphate pathway; D-ribulose 5-phosphate from D-glucose 6-phosphate (oxidative stage): step 2/3. Hydrolysis of 6-phosphogluconolactone to 6-phosphogluconate. This is 6-phosphogluconolactonase (pgl) from Treponema pallidum (strain Nichols).